The following is a 489-amino-acid chain: Monocarboxylate transporter 2 (489 aa).

At 1–21 the chain is on the cytoplasmic side; that stretch reads MPSESSVKATAAPPPFPLPPD. The helical transmembrane segment at 22–42 threads the bilayer; it reads GGWGWVVVCASFISIGFSYAF. The Extracellular segment spans residues 43–65; it reads PKAVTVFFNDIKDIFKTTSSQIA. Residues 66-86 traverse the membrane as a helical segment; sequence WISSIMLAVMYAGGPISSVLV. The Cytoplasmic segment spans residues 87-95; it reads NNYGSRPVV. A helical transmembrane segment spans residues 96 to 116; it reads IVGGLLCCTGMILASFSSSVI. Topologically, residues 117–121 are extracellular; the sequence is ELYLT. Residues 122–142 traverse the membrane as a helical segment; the sequence is VGFIGGLGLAFNLQPALTIIG. Residues 143–154 are Cytoplasmic-facing; the sequence is KYFYRKRPLANG. The chain crosses the membrane as a helical span at residues 155 to 175; it reads FAMAGSPVFLSTLAPFNQFLF. At 176-179 the chain is on the extracellular side; it reads NSYG. A helical membrane pass occupies residues 180–200; sequence WKGSFLILGAIFLHSCVAGCL. Residues 201–250 lie on the Cytoplasmic side of the membrane; sequence MRPVGPSPRAAKSKSKVGSRQDSSTKRLSKVSTAEKINRFLDFGLFTHRG. Residues 206-227 form a disordered region; the sequence is PSPRAAKSKSKVGSRQDSSTKR. A helical transmembrane segment spans residues 251-271; that stretch reads FLIYLSGNVVLFLGMFAPIIF. Topologically, residues 272-286 are extracellular; it reads LAPYAKDKGVDDYNS. A helical membrane pass occupies residues 287 to 307; sequence AFLLSVMAFTDMFARPSVGLI. The Cytoplasmic segment spans residues 308-316; it reads ANTSLIRPR. Residues 317 to 337 traverse the membrane as a helical segment; sequence IQYLFSVAIMFTGICHLLCPL. Residues 338-342 lie on the Extracellular side of the membrane; sequence AHSYT. The chain crosses the membrane as a helical span at residues 343–363; that stretch reads ALVVYVIFFGIGFGSISSLLF. Residues 364–377 are Cytoplasmic-facing; the sequence is ECLMDQVGASRFSS. Residues 378 to 398 form a helical membrane-spanning segment; sequence AVGLVTIVECCPVLFGPPLAG. The Extracellular portion of the chain corresponds to 399–410; sequence KLLDITGQYKYL. A helical membrane pass occupies residues 411 to 431; it reads YIASGIVVLSSGIYLLICNAI. Over 432–489 the chain is Cytoplasmic; that stretch reads NYRLLEKERKREKARRKKSASQASKEMEALSRSKQDDVTVKVSNTHNPPSDRDKESSI. The tract at residues 441–489 is disordered; it reads KREKARRKKSASQASKEMEALSRSKQDDVTVKVSNTHNPPSDRDKESSI. Basic and acidic residues-rich tracts occupy residues 456–470 and 480–489; these read KEMEALSRSKQDDVT and PSDRDKESSI.

Belongs to the major facilitator superfamily. Monocarboxylate porter (TC 2.A.1.13) family. As to quaternary structure, homodimer. Interacts with GRID2IP. Interacts with EMB; interaction mediates SLC16A7 targeting to the plasma membrane. Interacts with isoform 2 of BSG. In terms of tissue distribution, detected in brain and kidney (at protein level).

It localises to the cell membrane. It is found in the basolateral cell membrane. The protein localises to the cytoplasm. It catalyses the reaction 3-methyl-2-oxobutanoate(out) + H(+)(out) = 3-methyl-2-oxobutanoate(in) + H(+)(in). It carries out the reaction (S)-lactate(in) + H(+)(in) = (S)-lactate(out) + H(+)(out). The enzyme catalyses acetoacetate(out) + H(+)(out) = acetoacetate(in) + H(+)(in). The catalysed reaction is (R)-3-hydroxybutanoate(out) + H(+)(out) = (R)-3-hydroxybutanoate(in) + H(+)(in). It catalyses the reaction 4-methyl-2-oxopentanoate(out) + H(+)(out) = 4-methyl-2-oxopentanoate(in) + H(+)(in). It carries out the reaction pyruvate(out) + H(+)(out) = pyruvate(in) + H(+)(in). The enzyme catalyses (S)-3-hydroxybutanoate(out) + H(+)(out) = (S)-3-hydroxybutanoate(in) + H(+)(in). Its activity is regulated as follows. Transport activity exhibits steep dependence on substrate concentration. Substrate concentration sensitivity of SLC16A7 arises from the strong inter-subunit cooperativity of the SLC16A7 dimer during transport. Inhibited by AR-C155858. Functionally, proton-coupled monocarboxylate symporter. Catalyzes the rapid transport across the plasma membrane of monocarboxylates such as L-lactate, pyruvate and ketone bodies, acetoacetate, beta-hydroxybutyrate and acetate. Dimerization is functionally required and both subunits work cooperatively in transporting substrate. In Rattus norvegicus (Rat), this protein is Monocarboxylate transporter 2 (Slc16a7).